A 212-amino-acid chain; its full sequence is Uracil phosphoribosyltransferase (212 aa).

5-phospho-alpha-D-ribose 1-diphosphate is bound by residues arginine 78, arginine 103, and 130 to 138; that span reads DPMLATGGS. Uracil is bound by residues isoleucine 193 and 198 to 200; that span reads GDA. Aspartate 199 is a binding site for 5-phospho-alpha-D-ribose 1-diphosphate.

Belongs to the UPRTase family. Mg(2+) is required as a cofactor.

The catalysed reaction is UMP + diphosphate = 5-phospho-alpha-D-ribose 1-diphosphate + uracil. The protein operates within pyrimidine metabolism; UMP biosynthesis via salvage pathway; UMP from uracil: step 1/1. Its activity is regulated as follows. Allosterically activated by GTP. Catalyzes the conversion of uracil and 5-phospho-alpha-D-ribose 1-diphosphate (PRPP) to UMP and diphosphate. This Pseudomonas entomophila (strain L48) protein is Uracil phosphoribosyltransferase.